A 417-amino-acid polypeptide reads, in one-letter code: Tyrosine aminotransferase (417 aa).

An N6-(pyridoxal phosphate)lysine modification is found at lysine 249.

It belongs to the class-I pyridoxal-phosphate-dependent aminotransferase family. In terms of assembly, homodimer. Pyridoxal 5'-phosphate serves as cofactor.

The enzyme catalyses L-tyrosine + 2-oxoglutarate = 3-(4-hydroxyphenyl)pyruvate + L-glutamate. Its pathway is amino-acid degradation; L-phenylalanine degradation; acetoacetate and fumarate from L-phenylalanine: step 2/6. Functionally, transaminase involved in tyrosine breakdown. Converts tyrosine to p-hydroxyphenylpyruvate. Has much lower affinity and transaminase activity towards phenylalanine. The chain is Tyrosine aminotransferase (tat) from Dictyostelium discoideum (Social amoeba).